Reading from the N-terminus, the 508-residue chain is Protein DETOXIFICATION 52 (508 aa).

The next 12 membrane-spanning stretches (helical) occupy residues 48 to 68 (ILAA…LGHI), 78 to 98 (LAIA…ALGM), 122 to 142 (VLFL…LGKI), 156 to 176 (AQTY…LHPL), 189 to 209 (LTLA…FLVS), 222 to 242 (AAAS…IAGL), 270 to 290 (IGVC…GLLI), 300 to 320 (GILI…GLAV), 341 to 361 (IVAV…AWGV), 368 to 388 (IFTN…ILGL), 415 to 437 (INLG…WAAY), and 441 to 463 (GLWV…VVAT).

This sequence belongs to the multi antimicrobial extrusion (MATE) (TC 2.A.66.1) family. Detected in the part of the veins in cotyledons of 6-day-old seedlings and the basal parts of the petioles in older plants. Highly expressed in the vascular tissues of hypocotyl in dark-grown seedlings.

The protein localises to the late endosome membrane. May act as a negative regulator of hypocotyl cell elongation in the light. The polypeptide is Protein DETOXIFICATION 52 (Arabidopsis thaliana (Mouse-ear cress)).